A 434-amino-acid polypeptide reads, in one-letter code: UPF0597 protein CLB_1949 (434 aa).

It belongs to the UPF0597 family.

This chain is UPF0597 protein CLB_1949, found in Clostridium botulinum (strain ATCC 19397 / Type A).